A 121-amino-acid chain; its full sequence is Ribonuclease P protein component (121 aa).

This sequence belongs to the RnpA family. As to quaternary structure, consists of a catalytic RNA component (M1 or rnpB) and a protein subunit.

It catalyses the reaction Endonucleolytic cleavage of RNA, removing 5'-extranucleotides from tRNA precursor.. Its function is as follows. RNaseP catalyzes the removal of the 5'-leader sequence from pre-tRNA to produce the mature 5'-terminus. It can also cleave other RNA substrates such as 4.5S RNA. The protein component plays an auxiliary but essential role in vivo by binding to the 5'-leader sequence and broadening the substrate specificity of the ribozyme. The protein is Ribonuclease P protein component of Coxiella burnetii (strain Dugway 5J108-111).